Reading from the N-terminus, the 322-residue chain is Sideroflexin-1 (322 aa).

N-acetylserine is present on Ser-2. Residues 2 to 102 (SGEVPPNINI…MSAQVPMNMT (101 aa)) are Mitochondrial matrix-facing. The helical transmembrane segment at 103 to 120 (ITGCMMTFYRTTPAVLFW) threads the bilayer. Over 121–146 (QWINQSFNAVVNYTNRSGDAPLTVNE) the chain is Mitochondrial intermembrane. A helical transmembrane segment spans residues 147-167 (LGTAYVSATTGAVATALGLNA). Residues 168–174 (LTKHVSP) are Mitochondrial matrix-facing. Residues 175–195 (LIGRFVPFAAVAAANCINIPL) form a helical membrane-spanning segment. At 196–228 (MRQRELKVGIPVTDENGTRLGESTNAAKQAITQ) the chain is on the mitochondrial intermembrane side. Residues 229 to 249 (VVISRILMAAPGMAIPPFIMN) traverse the membrane as a helical segment. Topologically, residues 250 to 266 (TLEKKAFLKRFPWMSAP) are mitochondrial matrix. The chain crosses the membrane as a helical span at residues 267–287 (IQVTLVGFCLVFATPLCCALF). The Mitochondrial intermembrane portion of the chain corresponds to 288-322 (PQKSSMSVTSLEDDLQASIQKSHPELRRVYFNKGL).

Belongs to the sideroflexin family.

The protein localises to the mitochondrion inner membrane. It catalyses the reaction L-serine(in) = L-serine(out). The enzyme catalyses L-alanine(in) = L-alanine(out). It carries out the reaction L-cysteine(in) = L-cysteine(out). Amino acid transporter importing serine, an essential substrate of the mitochondrial branch of the one-carbon pathway, into mitochondria. Mitochondrial serine is then converted to glycine and formate, which exits to the cytosol where it is used to generate the charged folates that serve as one-carbon donors. May also transport other amino acids including alanine and cysteine. This chain is Sideroflexin-1 (Sfxn1), found in Rattus norvegicus (Rat).